The sequence spans 496 residues: Glutamyl-tRNA(Gln) amidotransferase subunit A, mitochondrial (496 aa).

Residues lysine 75 and serine 162 each act as charge relay system in the active site. The active-site Acyl-ester intermediate is the serine 186.

It belongs to the amidase family. GatA subfamily. In terms of assembly, subunit of the heterotrimeric GatCAB amidotransferase (AdT) complex, composed of A, B and C subunits.

Its subcellular location is the mitochondrion. It carries out the reaction L-glutamyl-tRNA(Gln) + L-glutamine + ATP + H2O = L-glutaminyl-tRNA(Gln) + L-glutamate + ADP + phosphate + H(+). Allows the formation of correctly charged Gln-tRNA(Gln) through the transamidation of misacylated Glu-tRNA(Gln) in the mitochondria. The reaction takes place in the presence of glutamine and ATP through an activated gamma-phospho-Glu-tRNA(Gln). This is Glutamyl-tRNA(Gln) amidotransferase subunit A, mitochondrial from Pediculus humanus subsp. corporis (Body louse).